The primary structure comprises 629 residues: tRNA uridine 5-carboxymethylaminomethyl modification enzyme MnmG (629 aa).

FAD-binding positions include 15 to 20 (GAGHAG), Val127, and Ser182. The segment at 203–227 (TPPRVKSSTIDYSKTEEQPGDDHPR) is disordered. Over residues 215 to 227 (SKTEEQPGDDHPR) the composition is skewed to basic and acidic residues. 274 to 288 (GARYCPSIEDKIVRF) is a binding site for NAD(+). Gln371 contributes to the FAD binding site.

The protein belongs to the MnmG family. Homodimer. Heterotetramer of two MnmE and two MnmG subunits. Requires FAD as cofactor.

It localises to the cytoplasm. In terms of biological role, NAD-binding protein involved in the addition of a carboxymethylaminomethyl (cmnm) group at the wobble position (U34) of certain tRNAs, forming tRNA-cmnm(5)s(2)U34. In Listeria welshimeri serovar 6b (strain ATCC 35897 / DSM 20650 / CCUG 15529 / CIP 8149 / NCTC 11857 / SLCC 5334 / V8), this protein is tRNA uridine 5-carboxymethylaminomethyl modification enzyme MnmG.